The following is a 31-amino-acid chain: Putative translational regulatory protein ArgL (31 aa).

May serve a regulatory role in expression of downstream gene argF; in an argL-argF-lacZ fusion mutation of the start codon to a stop codon in argL increases expression of beta-galactosidase. The sequence is that of Putative translational regulatory protein ArgL from Escherichia coli (strain K12).